Consider the following 299-residue polypeptide: Zinc finger protein 414 (299 aa).

2 stretches are compositionally biased toward polar residues: residues 1–20 and 70–80; these read MEELSGPSSDTLATVESSSN and SCQTSSTTRGV. Residues 1–102 are disordered; sequence MEELSGPSSD…PPPGKQIPCS (102 aa). 2 C2H2-type zinc fingers span residues 99 to 123 and 135 to 159; these read IPCSSPGCSLSFPSVRDLAQHLRTH and FRCSALSCTESFPSMQELVAHGKLH. A C2H2-type 3; degenerate zinc finger spans residues 166 to 190; sequence FKCENCLLRFRTHRSLFKHLHVCID. Disordered stretches follow at residues 193-228 and 254-299; these read QNPAPPPPPALDKEPPVPERPPESDPSSSLGLPFPL and PRLR…GACR. Residues 203–215 show a composition bias toward basic and acidic residues; it reads LDKEPPVPERPPE. Over residues 217–228 the composition is skewed to low complexity; sequence DPSSSLGLPFPL. Positions 268–285 are enriched in polar residues; that stretch reads TSSTAIWKKSQGATSSPR.

The protein belongs to the krueppel C2H2-type zinc-finger protein family.

The protein resides in the nucleus. In terms of biological role, may be involved in transcriptional regulation. This Rattus norvegicus (Rat) protein is Zinc finger protein 414 (Znf414).